A 458-amino-acid polypeptide reads, in one-letter code: MILMPMASVVAVAEPKWVSVWGRFLWMALLSMALGSLLALLLPLGVVEEHCLAVLRGFHLLRSKLDRAQPVVPKCTSLCTELSVSSRDAGLLTVKTTASPAGKLEAKAALNQALEMKRQGKRGKAHKLFLHALKMDPGFVDALNEFGIFSEEDKDIIQADYLYTRALTISPFHEKALVNRDRTLPLVEEIDQRYFSVIDSKVKKVMSIPKGSSALRRVMEETYYHHIYHTVAIEGNTLTLSEIRHILETRYAVPGKSLEEQNEVIGMHAAMKYINTTLVSRIGSVTMDDMLEIHRRVLGYVDPVEAGRFRRTQVLVGHHIPPHPRDVEKQMQEFTQWLNSEDAMNLHPVEFAALAHYKLVYIHPFIDGNGRTSRLLMNLILMQAGYPPITIRKEQRSEYYHVLEVANEGDVRPFIRFIAKCTEVTLDTLLLATTEYSVALPEAQPNHSGFKETLPVRP.

Residues 1–23 lie on the Cytoplasmic side of the membrane; sequence MILMPMASVVAVAEPKWVSVWGR. Residues 24–44 form a helical; Signal-anchor for type II membrane protein membrane-spanning segment; the sequence is FLWMALLSMALGSLLALLLPL. Topologically, residues 45–458 are lumenal; the sequence is GVVEEHCLAV…GFKETLPVRP (414 aa). At threonine 80 the chain carries O-AMP-threonine; by autocatalysis. 2 TPR repeats span residues 106–139 and 140–173; these read AKAA…DPGF and VDAL…SPFH. Threonine 183 carries the O-AMP-threonine; by autocatalysis modification. Residues 230–235 carry the Inhibitory (S/T)XXXE(G/N) motif motif; sequence TVAIEG. Glutamate 234 is an ATP binding site. Asparagine 275 carries N-linked (GlcNAc...) asparagine glycosylation. Positions 285–420 constitute a Fido domain; the sequence is VTMDDMLEIH…VRPFIRFIAK (136 aa). 316–319 is a binding site for ATP; it reads VGHH. The active site involves histidine 363. ATP-binding positions include 367-374, 399-400, and asparagine 407; these read DGNGRTSR and YY.

This sequence belongs to the fic family. In terms of assembly, homodimer. Interacts with HD. The cofactor is Mg(2+). It depends on Mn(2+) as a cofactor. In terms of processing, auto-AMPylated in vitro.

It is found in the endoplasmic reticulum membrane. It catalyses the reaction L-tyrosyl-[protein] + ATP = O-(5'-adenylyl)-L-tyrosyl-[protein] + diphosphate. It carries out the reaction 3-O-(5'-adenylyl)-L-threonyl-[protein] + H2O = L-threonyl-[protein] + AMP + H(+). The catalysed reaction is L-threonyl-[protein] + ATP = 3-O-(5'-adenylyl)-L-threonyl-[protein] + diphosphate. Its activity is regulated as follows. The side chain of Glu-234 determines which of the two opposing activities (AMPylase or de-AMPylase) will take place. In response to endoplasmic reticulum stress, mediates de-AMPylase activity. Adenylyltransferase activity is inhibited by the inhibitory helix present at the N-terminus: Glu-234 binds ATP and competes with ATP-binding at Arg-374, thereby preventing adenylyltransferase activity. In unstressed cells, disengagement of Glu-234 promotes adenylyltransferase activity. Activation dissociates ATP-binding from Glu-234, allowing ordered binding of the entire ATP moiety with the alpha-phosphate in an orientation that is productive for accepting an incoming target hydroxyl side chain. Its function is as follows. Protein that can both mediate the addition of adenosine 5'-monophosphate (AMP) to specific residues of target proteins (AMPylation), and the removal of the same modification from target proteins (de-AMPylation), depending on the context. The side chain of Glu-231 determines which of the two opposing activities (AMPylase or de-AMPylase) will take place. Acts as a key regulator of the ERN1/IRE1-mediated unfolded protein response (UPR) by mediating AMPylation or de-AMPylation of HSPA5/BiP. In unstressed cells, acts as an adenylyltransferase by mediating AMPylation of HSPA5/BiP at 'Thr-518', thereby inactivating it. In response to endoplasmic reticulum stress, acts as a phosphodiesterase by mediating removal of ATP (de-AMPylation) from HSPA5/BiP at 'Thr-518', leading to restore HSPA5/BiP activity. Although it is able to AMPylate RhoA, Rac and Cdc42 Rho GTPases in vitro, Rho GTPases do not constitute physiological substrates. This Mus musculus (Mouse) protein is Protein adenylyltransferase FICD.